The sequence spans 357 residues: Holliday junction branch migration complex subunit RuvB (357 aa).

Positions 1 to 15 (MAIQSDSLSSLPDSP) are enriched in low complexity. Residues 1-30 (MAIQSDSLSSLPDSPRIVAPQPVSPNEESI) form a disordered region. The tract at residues 13-195 (DSPRIVAPQP…FGIVSRLEFY (183 aa)) is large ATPase domain (RuvB-L). Residues leucine 34, arginine 35, glycine 76, lysine 79, threonine 80, threonine 81, 142 to 144 (EDF), arginine 185, tyrosine 195, and arginine 232 each bind ATP. Residue threonine 80 coordinates Mg(2+). Residues 196-266 (NTDELARIVT…AAGRALAMLD (71 aa)) are small ATPAse domain (RuvB-S). The segment at 269–357 (PQGLDVMDRK…SGGTGELFSK (89 aa)) is head domain (RuvB-H). Residues arginine 305, arginine 324, and arginine 329 each coordinate DNA.

It belongs to the RuvB family. As to quaternary structure, homohexamer. Forms an RuvA(8)-RuvB(12)-Holliday junction (HJ) complex. HJ DNA is sandwiched between 2 RuvA tetramers; dsDNA enters through RuvA and exits via RuvB. An RuvB hexamer assembles on each DNA strand where it exits the tetramer. Each RuvB hexamer is contacted by two RuvA subunits (via domain III) on 2 adjacent RuvB subunits; this complex drives branch migration. In the full resolvosome a probable DNA-RuvA(4)-RuvB(12)-RuvC(2) complex forms which resolves the HJ.

Its subcellular location is the cytoplasm. The enzyme catalyses ATP + H2O = ADP + phosphate + H(+). Its function is as follows. The RuvA-RuvB-RuvC complex processes Holliday junction (HJ) DNA during genetic recombination and DNA repair, while the RuvA-RuvB complex plays an important role in the rescue of blocked DNA replication forks via replication fork reversal (RFR). RuvA specifically binds to HJ cruciform DNA, conferring on it an open structure. The RuvB hexamer acts as an ATP-dependent pump, pulling dsDNA into and through the RuvAB complex. RuvB forms 2 homohexamers on either side of HJ DNA bound by 1 or 2 RuvA tetramers; 4 subunits per hexamer contact DNA at a time. Coordinated motions by a converter formed by DNA-disengaged RuvB subunits stimulates ATP hydrolysis and nucleotide exchange. Immobilization of the converter enables RuvB to convert the ATP-contained energy into a lever motion, pulling 2 nucleotides of DNA out of the RuvA tetramer per ATP hydrolyzed, thus driving DNA branch migration. The RuvB motors rotate together with the DNA substrate, which together with the progressing nucleotide cycle form the mechanistic basis for DNA recombination by continuous HJ branch migration. Branch migration allows RuvC to scan DNA until it finds its consensus sequence, where it cleaves and resolves cruciform DNA. The polypeptide is Holliday junction branch migration complex subunit RuvB (Bordetella parapertussis (strain 12822 / ATCC BAA-587 / NCTC 13253)).